We begin with the raw amino-acid sequence, 1125 residues long: Speract receptor (1125 aa).

An N-terminal signal peptide occupies residues M1 to A21. Residues R22–Y510 lie on the Extracellular side of the membrane. Residues N185 and N409 are each glycosylated (N-linked (GlcNAc...) asparagine). Residues L511–Y531 form a helical membrane-spanning segment. The Cytoplasmic portion of the chain corresponds to R532–V1125. A Protein kinase domain is found at M571 to L839. Residues S914–E1044 form the Guanylate cyclase domain.

It belongs to the adenylyl cyclase class-4/guanylyl cyclase family.

It is found in the membrane. It carries out the reaction GTP = 3',5'-cyclic GMP + diphosphate. Functionally, implicated as a cell-surface receptor on spermatozoa for 'speract' a chemotactic peptide, and on various other cells as a receptor for atrial natriuretic peptide. The polypeptide is Speract receptor (Strongylocentrotus purpuratus (Purple sea urchin)).